Consider the following 60-residue polypeptide: Toxin FS-2 (60 aa).

Disulfide bonds link C3-C22, C17-C39, C41-C52, and C53-C58. Residues 41 to 48 are important for binding to L-type calcium channels; sequence CPTAMWPY.

The protein belongs to the three-finger toxin family. Short-chain subfamily. L-type calcium blocker sub-subfamily. In terms of tissue distribution, expressed by the venom gland.

The protein resides in the secreted. Its function is as follows. Specific blocker of the voltage-dependent L-type calcium channel (Cav1/CACNA1). Inhibits cardiac contractions. The protein is Toxin FS-2 of Dendroaspis polylepis polylepis (Black mamba).